Consider the following 206-residue polypeptide: LexA repressor (206 aa).

Residues 28-48 constitute a DNA-binding region (H-T-H motif); sequence VREIGEAVGLASSSTVHGHLA. Active-site for autocatalytic cleavage activity residues include S128 and K166.

Belongs to the peptidase S24 family. As to quaternary structure, homodimer.

The catalysed reaction is Hydrolysis of Ala-|-Gly bond in repressor LexA.. Its function is as follows. Represses a number of genes involved in the response to DNA damage (SOS response), including recA and lexA. In the presence of single-stranded DNA, RecA interacts with LexA causing an autocatalytic cleavage which disrupts the DNA-binding part of LexA, leading to derepression of the SOS regulon and eventually DNA repair. In Bacillus pumilus (strain SAFR-032), this protein is LexA repressor.